The primary structure comprises 369 residues: Aminomethyltransferase (369 aa).

The protein belongs to the GcvT family. As to quaternary structure, the glycine cleavage system is composed of four proteins: P, T, L and H.

It catalyses the reaction N(6)-[(R)-S(8)-aminomethyldihydrolipoyl]-L-lysyl-[protein] + (6S)-5,6,7,8-tetrahydrofolate = N(6)-[(R)-dihydrolipoyl]-L-lysyl-[protein] + (6R)-5,10-methylene-5,6,7,8-tetrahydrofolate + NH4(+). Its function is as follows. The glycine cleavage system catalyzes the degradation of glycine. This is Aminomethyltransferase from Alkaliphilus metalliredigens (strain QYMF).